A 651-amino-acid polypeptide reads, in one-letter code: Probable potassium transport system protein Kup (651 aa).

A run of 12 helical transmembrane segments spans residues 41-61 (LVLG…IYAF), 82-102 (VVSL…VLFV), 130-150 (LILG…VITP), 163-183 (IVAP…LVTL), 194-214 (VAIV…ASGL), 235-255 (FLTV…LAMT), 276-296 (WLWI…AFIL), 309-329 (MIPS…TVIA), 366-386 (IYIP…VLGF), 395-415 (AYGI…YIVM), 426-446 (ALPI…ANII), and 450-470 (EGGW…WTWV).

It belongs to the HAK/KUP transporter (TC 2.A.72) family.

It localises to the cell inner membrane. It catalyses the reaction K(+)(in) + H(+)(in) = K(+)(out) + H(+)(out). Transport of potassium into the cell. Likely operates as a K(+):H(+) symporter. The chain is Probable potassium transport system protein Kup from Brucella melitensis biotype 1 (strain ATCC 23456 / CCUG 17765 / NCTC 10094 / 16M).